The chain runs to 433 residues: Trigger factor (433 aa).

The region spanning 166-251 is the PPIase FKBP-type domain; it reads GDFAVIDFEG…LHEIQERAKP (86 aa).

This sequence belongs to the FKBP-type PPIase family. Tig subfamily.

It is found in the cytoplasm. The catalysed reaction is [protein]-peptidylproline (omega=180) = [protein]-peptidylproline (omega=0). In terms of biological role, involved in protein export. Acts as a chaperone by maintaining the newly synthesized protein in an open conformation. Functions as a peptidyl-prolyl cis-trans isomerase. The chain is Trigger factor from Aliarcobacter butzleri (strain RM4018) (Arcobacter butzleri).